The sequence spans 205 residues: Ribonuclease HII (205 aa).

Residues 1–203 (MKAGIDEAGK…VSNLRQKTLD (203 aa)) form the RNase H type-2 domain. A divalent metal cation contacts are provided by Asp-6 and Glu-7. Arg-46 provides a ligand contact to substrate. A divalent metal cation is bound at residue Asp-101. The substrate site is built by Lys-143, Arg-146, and Tyr-164.

This sequence belongs to the RNase HII family. Requires Mn(2+) as cofactor. Mg(2+) is required as a cofactor.

The protein resides in the cytoplasm. The enzyme catalyses Endonucleolytic cleavage to 5'-phosphomonoester.. Functionally, endonuclease that specifically degrades the RNA of RNA-DNA hybrids. This chain is Ribonuclease HII (rnhB), found in Archaeoglobus fulgidus (strain ATCC 49558 / DSM 4304 / JCM 9628 / NBRC 100126 / VC-16).